Reading from the N-terminus, the 252-residue chain is Phosphate import ATP-binding protein PstB 1 (252 aa).

Residues 6 to 247 enclose the ABC transporter domain; the sequence is LKVNDLSVYY…PQKQETEDYI (242 aa). Position 38 to 45 (38 to 45) interacts with ATP; that stretch reads GPSGSGKS.

It belongs to the ABC transporter superfamily. Phosphate importer (TC 3.A.1.7) family. In terms of assembly, the complex is composed of two ATP-binding proteins (PstB), two transmembrane proteins (PstC and PstA) and a solute-binding protein (PstS).

It is found in the cell membrane. The catalysed reaction is phosphate(out) + ATP + H2O = ADP + 2 phosphate(in) + H(+). In terms of biological role, part of the ABC transporter complex PstSACB involved in phosphate import. Responsible for energy coupling to the transport system. This is Phosphate import ATP-binding protein PstB 1 from Streptococcus mutans serotype c (strain ATCC 700610 / UA159).